The following is a 198-amino-acid chain: Transcriptional regulator GfcR (198 aa).

It belongs to the purine/pyrimidine phosphoribosyltransferase family. GfcR subfamily.

This Methanocorpusculum labreanum (strain ATCC 43576 / DSM 4855 / Z) protein is Transcriptional regulator GfcR.